The sequence spans 1065 residues: Alpha-L-arabinofuranosidase (1065 aa).

The N-terminal stretch at methionine 1–alanine 26 is a signal peptide. A BIG2 domain is found at valine 277–glutamate 346. The segment at lysine 997–serine 1031 is disordered. A compositionally biased stretch (polar residues) spans lysine 1014 to serine 1031. The helical transmembrane segment at valine 1040–tryptophan 1060 threads the bilayer.

Belongs to the glycosyl hydrolase 43 family.

The protein resides in the cell membrane. The catalysed reaction is Hydrolysis of terminal non-reducing alpha-L-arabinofuranoside residues in alpha-L-arabinosides.. Functionally, involved in the type II arabinogalactan (AG) side chains degradation. Releases arabinofuranose (Araf) from alpha-1,3-Araf-substituted beta-1,6-galactooligosaccharides. Can use radish root AGP, larch AG and arabinan. Shows weaker activity with gum arabic and arabinoxylan. The polypeptide is Alpha-L-arabinofuranosidase (Bifidobacterium longum subsp. longum (strain ATCC 15707 / DSM 20219 / JCM 1217 / NCTC 11818 / E194b)).